The following is a 128-amino-acid chain: Transcription antitermination protein NusB (128 aa).

This sequence belongs to the NusB family.

Its function is as follows. Involved in transcription antitermination. Required for transcription of ribosomal RNA (rRNA) genes. Binds specifically to the boxA antiterminator sequence of the ribosomal RNA (rrn) operons. The chain is Transcription antitermination protein NusB from Listeria monocytogenes serotype 4a (strain HCC23).